Reading from the N-terminus, the 180-residue chain is Major urinary protein 1 (180 aa).

A signal peptide spans 1–18; it reads MKMLLLLCLGLTLVCVHA. Residues C82 and C175 are joined by a disulfide bond.

The protein belongs to the calycin superfamily. Lipocalin family. As to expression, abundant in the urine of adult male mice but absent from that of females.

It is found in the secreted. Binds pheromones that are released from drying urine of males. These pheromones affect the sexual behavior of females. The sequence is that of Major urinary protein 1 (Mup1) from Mus musculus (Mouse).